The sequence spans 117 residues: Large ribosomal subunit protein bL20 (117 aa).

This sequence belongs to the bacterial ribosomal protein bL20 family.

Its function is as follows. Binds directly to 23S ribosomal RNA and is necessary for the in vitro assembly process of the 50S ribosomal subunit. It is not involved in the protein synthesizing functions of that subunit. The sequence is that of Large ribosomal subunit protein bL20 from Rickettsia africae (strain ESF-5).